Consider the following 144-residue polypeptide: Transcriptional regulator MraZ (144 aa).

SpoVT-AbrB domains are found at residues 5–47 and 76–119; these read EYDH…TLDE and AVEV…DRET.

Belongs to the MraZ family. In terms of assembly, forms oligomers.

The protein resides in the cytoplasm. The protein localises to the nucleoid. This is Transcriptional regulator MraZ from Staphylococcus aureus.